The primary structure comprises 462 residues: A-type ATP synthase subunit B (462 aa).

The protein belongs to the ATPase alpha/beta chains family. Has multiple subunits with at least A(3), B(3), C, D, E, F, H, I and proteolipid K(x).

The protein resides in the cell membrane. Functionally, component of the A-type ATP synthase that produces ATP from ADP in the presence of a proton gradient across the membrane. The B chain is a regulatory subunit. In Methanococcus maripaludis (strain C5 / ATCC BAA-1333), this protein is A-type ATP synthase subunit B.